Reading from the N-terminus, the 268-residue chain is Gasdermin bGSDM (268 aa).

Cys-3 is lipidated: S-palmitoyl cysteine. 4 consecutive transmembrane segments (beta stranded) span residues Ile-78–Ile-94, Ala-103–Glu-121, Lys-168–Val-185, and Ala-195–Phe-211. A C-terminal region region spans residues Gly-248–Thr-268.

It belongs to the bacterial gasdermin family. In terms of assembly, monomer in solution. As to quaternary structure, forms large, homooligomeric ring-shaped pores when inserted in membranes. Cleavage by the adjacently encoded protease (G563DRAFT_02009) between Leu-247 and Gly-248 relieves autoinhibition, releasing the N-terminus which initiates loss of cell integrity. Post-translationally, palmitoylation helps stabilize the inactive state; may self-palmitoylate. Palmitoylation is not required for permeabilization of liposomes by the ring-like pores in vitro. Palmitoylation plays a significant role in pore formation.

The protein localises to the cytoplasm. It is found in the cell inner membrane. The full-length protein before cleavage is inactive: intramolecular interactions between the N-terminal domain and the C-terminal region, as well as the lipid modification, mediate autoinhibition. The pyroptosis-like-inducing activity is carried by the released N-terminal domain (gasdermin bGSDM, N-terminus). Its function is as follows. Precursor of a pore-forming protein involved in defense against bacteriophages. Cleavage of this precursor by its dedicated, neighboring protease (G563DRAFT_02009) releases the active moiety (gasdermin bGSDM, N-terminus) which inserts into membranes, forming pores and triggering cell death. Expression of bGSDM and its protease is highly toxic in E.coli. Cells expressing the gene pair stop dividing and lose membrane integrity. Both proteins are required to kill E.coli. In terms of biological role, pore-forming protein that causes membrane permeabilization via a pyroptosis-like activity. Makes ring-like pores with walls about 50 Angstroms thick and an interior pore diameter of 200-300 Angstroms, when integrated in liposomes. This is Gasdermin bGSDM from Runella zeae (strain ATCC BAA-293 / DSM 19591 / LMG 21438 / NS12).